We begin with the raw amino-acid sequence, 207 residues long: MDNEKGLLIVLSGPSGVGKGTVRKKIFDDPSTSYKYSISMTTRDKRQGEVDGVDYFFKAKSEFEELIKQDQFIEYAEYVGNYYGTPVQYVKDTMDRGYDVFLEIEVEGAKQVRKKFPDALFIFLAPPSLDHLRERLVGRGTESSEKIQSRVHEARKEVEMMNLYDYVVVNDEVELAKQRIQSIVEAEHLKRERIEAKYRKMILEAKK.

Positions 6-185 (GLLIVLSGPS…AKQRIQSIVE (180 aa)) constitute a Guanylate kinase-like domain. 13-20 (GPSGVGKG) serves as a coordination point for ATP.

The protein belongs to the guanylate kinase family.

It localises to the cytoplasm. It catalyses the reaction GMP + ATP = GDP + ADP. Its function is as follows. Essential for recycling GMP and indirectly, cGMP. This Staphylococcus saprophyticus subsp. saprophyticus (strain ATCC 15305 / DSM 20229 / NCIMB 8711 / NCTC 7292 / S-41) protein is Guanylate kinase.